We begin with the raw amino-acid sequence, 898 residues long: Protein translocase subunit SecA (898 aa).

ATP contacts are provided by residues Gln87, 105–109 (GEGKT), and Asp512. Residues 855–865 (MQYQNNEGTSS) show a composition bias toward polar residues. The tract at residues 855–898 (MQYQNNEGTSSLHEKSEHKIGRNESCPCGSGKKYKHCHGSKAKY) is disordered. Residues 866-876 (LHEKSEHKIGR) show a composition bias toward basic and acidic residues. Residues Cys880, Cys882, Cys891, and His892 each contribute to the Zn(2+) site. Basic residues predominate over residues 886–898 (KKYKHCHGSKAKY).

The protein belongs to the SecA family. In terms of assembly, monomer and homodimer. Part of the essential Sec protein translocation apparatus which comprises SecA, SecYEG and auxiliary proteins SecDF-YajC and YidC. Zn(2+) is required as a cofactor.

The protein resides in the cell inner membrane. Its subcellular location is the cytoplasm. The enzyme catalyses ATP + H2O + cellular proteinSide 1 = ADP + phosphate + cellular proteinSide 2.. Its function is as follows. Part of the Sec protein translocase complex. Interacts with the SecYEG preprotein conducting channel. Has a central role in coupling the hydrolysis of ATP to the transfer of proteins into and across the cell membrane, serving both as a receptor for the preprotein-SecB complex and as an ATP-driven molecular motor driving the stepwise translocation of polypeptide chains across the membrane. The polypeptide is Protein translocase subunit SecA (Histophilus somni (strain 129Pt) (Haemophilus somnus)).